We begin with the raw amino-acid sequence, 515 residues long: 2,3-bisphosphoglycerate-independent phosphoglycerate mutase (515 aa).

Residues D14 and S64 each coordinate Mn(2+). Catalysis depends on S64, which acts as the Phosphoserine intermediate. Residues H125, 155-156 (RD), R187, R193, 263-266 (RADR), and K337 each bind substrate. Residues D404, H408, D445, H446, and H464 each coordinate Mn(2+).

This sequence belongs to the BPG-independent phosphoglycerate mutase family. As to quaternary structure, monomer. The cofactor is Mn(2+).

It catalyses the reaction (2R)-2-phosphoglycerate = (2R)-3-phosphoglycerate. It participates in carbohydrate degradation; glycolysis; pyruvate from D-glyceraldehyde 3-phosphate: step 3/5. In terms of biological role, catalyzes the interconversion of 2-phosphoglycerate and 3-phosphoglycerate. The protein is 2,3-bisphosphoglycerate-independent phosphoglycerate mutase of Yersinia pestis bv. Antiqua (strain Antiqua).